A 319-amino-acid chain; its full sequence is Acetylglutamate kinase (319 aa).

Residues 74–75, Arg-96, and Asn-210 each bind substrate; that span reads GG.

Belongs to the acetylglutamate kinase family. ArgB subfamily.

Its subcellular location is the cytoplasm. The catalysed reaction is N-acetyl-L-glutamate + ATP = N-acetyl-L-glutamyl 5-phosphate + ADP. It functions in the pathway amino-acid biosynthesis; L-arginine biosynthesis; N(2)-acetyl-L-ornithine from L-glutamate: step 2/4. Its function is as follows. Catalyzes the ATP-dependent phosphorylation of N-acetyl-L-glutamate. The chain is Acetylglutamate kinase from Pseudarthrobacter chlorophenolicus (strain ATCC 700700 / DSM 12829 / CIP 107037 / JCM 12360 / KCTC 9906 / NCIMB 13794 / A6) (Arthrobacter chlorophenolicus).